Consider the following 875-residue polypeptide: DNA mismatch repair protein MutS (875 aa).

Residue 626 to 633 (GPNMAGKS) coordinates ATP. The segment at 830 to 855 (RAAPPPPAPAAPKTSPVEERLREIQP) is disordered. Residues 845–855 (PVEERLREIQP) show a composition bias toward basic and acidic residues.

Belongs to the DNA mismatch repair MutS family.

In terms of biological role, this protein is involved in the repair of mismatches in DNA. It is possible that it carries out the mismatch recognition step. This protein has a weak ATPase activity. The sequence is that of DNA mismatch repair protein MutS from Cereibacter sphaeroides (strain ATCC 17023 / DSM 158 / JCM 6121 / CCUG 31486 / LMG 2827 / NBRC 12203 / NCIMB 8253 / ATH 2.4.1.) (Rhodobacter sphaeroides).